The sequence spans 598 residues: Aspartate--tRNA(Asp/Asn) ligase (598 aa).

Glutamate 172 is a binding site for L-aspartate. The aspartate stretch occupies residues 196 to 199 (QLFK). Arginine 218 is a binding site for L-aspartate. ATP-binding positions include 218-220 (RDE) and glutamine 227. Histidine 455 serves as a coordination point for L-aspartate. Glutamate 489 contacts ATP. Arginine 496 serves as a coordination point for L-aspartate. 541-544 (GLDR) is a binding site for ATP.

It belongs to the class-II aminoacyl-tRNA synthetase family. Type 1 subfamily. In terms of assembly, homodimer.

The protein localises to the cytoplasm. It catalyses the reaction tRNA(Asx) + L-aspartate + ATP = L-aspartyl-tRNA(Asx) + AMP + diphosphate. Functionally, aspartyl-tRNA synthetase with relaxed tRNA specificity since it is able to aspartylate not only its cognate tRNA(Asp) but also tRNA(Asn). Reaction proceeds in two steps: L-aspartate is first activated by ATP to form Asp-AMP and then transferred to the acceptor end of tRNA(Asp/Asn). The protein is Aspartate--tRNA(Asp/Asn) ligase of Burkholderia mallei (strain ATCC 23344).